Reading from the N-terminus, the 294-residue chain is Glycine--tRNA ligase alpha subunit (294 aa).

Belongs to the class-II aminoacyl-tRNA synthetase family. In terms of assembly, tetramer of two alpha and two beta subunits.

It localises to the cytoplasm. It carries out the reaction tRNA(Gly) + glycine + ATP = glycyl-tRNA(Gly) + AMP + diphosphate. The chain is Glycine--tRNA ligase alpha subunit from Natranaerobius thermophilus (strain ATCC BAA-1301 / DSM 18059 / JW/NM-WN-LF).